The chain runs to 256 residues: Thiazole synthase (256 aa).

The Schiff-base intermediate with DXP role is filled by K96. Residues G157, A183–G184, and N205–T206 contribute to the 1-deoxy-D-xylulose 5-phosphate site.

This sequence belongs to the ThiG family. Homotetramer. Forms heterodimers with either ThiH or ThiS.

It localises to the cytoplasm. The catalysed reaction is [ThiS sulfur-carrier protein]-C-terminal-Gly-aminoethanethioate + 2-iminoacetate + 1-deoxy-D-xylulose 5-phosphate = [ThiS sulfur-carrier protein]-C-terminal Gly-Gly + 2-[(2R,5Z)-2-carboxy-4-methylthiazol-5(2H)-ylidene]ethyl phosphate + 2 H2O + H(+). The protein operates within cofactor biosynthesis; thiamine diphosphate biosynthesis. Catalyzes the rearrangement of 1-deoxy-D-xylulose 5-phosphate (DXP) to produce the thiazole phosphate moiety of thiamine. Sulfur is provided by the thiocarboxylate moiety of the carrier protein ThiS. In vitro, sulfur can be provided by H(2)S. The protein is Thiazole synthase of Bacillus mycoides (strain KBAB4) (Bacillus weihenstephanensis).